Here is an 81-residue protein sequence, read N- to C-terminus: Conotoxin Vc6.7 (81 aa).

The first 19 residues, 1–19, serve as a signal peptide directing secretion; it reads MEKLTILLLVAAVLMSIQA. A propeptide spanning residues 20–44 is cleaved from the precursor; it reads VNQEKHQRAKMNLLSKRKPPAERWW. 3 disulfide bridges follow: cysteine 49–cysteine 63, cysteine 56–cysteine 67, and cysteine 62–cysteine 72.

This sequence belongs to the conotoxin O2 superfamily. As to expression, expressed by the venom duct.

It localises to the secreted. In terms of biological role, inhibits voltage-gated ion channels. This is Conotoxin Vc6.7 from Conus victoriae (Queen Victoria cone).